A 294-amino-acid polypeptide reads, in one-letter code: Beta-lactamase (294 aa).

Residues 1–30 (MKHSSLRRSLLLAGITLPLVSFALPAWANA) form the signal peptide. The active-site Acyl-ester intermediate is the serine 75. Residue 239 to 241 (KTG) participates in substrate binding.

Belongs to the class-A beta-lactamase family.

It carries out the reaction a beta-lactam + H2O = a substituted beta-amino acid. This Yersinia enterocolitica protein is Beta-lactamase (blaA).